Reading from the N-terminus, the 427-residue chain is 3-phosphoshikimate 1-carboxyvinyltransferase (427 aa).

Residues Lys20, Ser21, and Arg25 each contribute to the 3-phosphoshikimate site. Lys20 serves as a coordination point for phosphoenolpyruvate. Residues Gly92 and Arg120 each contribute to the phosphoenolpyruvate site. The 3-phosphoshikimate site is built by Ser166, Gln168, Asp312, and Lys339. Gln168 contacts phosphoenolpyruvate. Asp312 (proton acceptor) is an active-site residue. Phosphoenolpyruvate is bound by residues Arg343 and Arg385.

It belongs to the EPSP synthase family. As to quaternary structure, monomer.

The protein localises to the cytoplasm. It catalyses the reaction 3-phosphoshikimate + phosphoenolpyruvate = 5-O-(1-carboxyvinyl)-3-phosphoshikimate + phosphate. It participates in metabolic intermediate biosynthesis; chorismate biosynthesis; chorismate from D-erythrose 4-phosphate and phosphoenolpyruvate: step 6/7. Catalyzes the transfer of the enolpyruvyl moiety of phosphoenolpyruvate (PEP) to the 5-hydroxyl of shikimate-3-phosphate (S3P) to produce enolpyruvyl shikimate-3-phosphate and inorganic phosphate. The polypeptide is 3-phosphoshikimate 1-carboxyvinyltransferase (Streptococcus sanguinis (strain SK36)).